Here is a 409-residue protein sequence, read N- to C-terminus: Bone morphogenetic protein 4 (409 aa).

The first 24 residues, 1–24, serve as a signal peptide directing secretion; it reads MIPGNRMLMVVLLCQVLLGGASHA. The propeptide occupies 25–293; it reads SLIPETGKKK…ALTRRRRAKR (269 aa). Phosphoserine is present on Ser91. N-linked (GlcNAc...) asparagine glycosylation is found at Asn144 and Asn209. The disordered stretch occupies residues 284–308; that stretch reads ALTRRRRAKRSPKHHPQRARKKNKN. Intrachain disulfides connect Cys309/Cys374, Cys338/Cys406, and Cys342/Cys408. Asn351 and Asn366 each carry an N-linked (GlcNAc...) asparagine glycan.

This sequence belongs to the TGF-beta family. Homodimer; disulfide-linked. Interacts with GREM2. Part of a complex consisting of TWSG1 and CHRD. Interacts with the serine proteases, HTRA1 and HTRA3; the interaction with either inhibits BMP4-mediated signaling. The HTRA protease activity is required for this inhibition. Interacts with SOSTDC1. Interacts with FBN1 (via N-terminal domain) and FBN2. Interacts with type I receptor BMPR1A. Interacts with type II receptor BMPR2. Interacts with FSTL1; this interaction inhibits the activation of the BMP4/Smad1/5/8 signaling pathway. Interacts with SCUBE3. Interacts with TGFBR3.

Its subcellular location is the secreted. The protein localises to the extracellular space. It is found in the extracellular matrix. Growth factor of the TGF-beta superfamily that plays essential roles in many developmental processes, including neurogenesis, vascular development, angiogenesis and osteogenesis. Acts in concert with PTHLH/PTHRP to stimulate ductal outgrowth during embryonic mammary development and to inhibit hair follicle induction. Initiates the canonical BMP signaling cascade by associating with type I receptor BMPR1A and type II receptor BMPR2. Once all three components are bound together in a complex at the cell surface, BMPR2 phosphorylates and activates BMPR1A. In turn, BMPR1A propagates signal by phosphorylating SMAD1/5/8 that travel to the nucleus and act as activators and repressors of transcription of target genes. Positively regulates the expression of odontogenic development regulator MSX1 via inducing the IPO7-mediated import of SMAD1 to the nucleus. Required for MSX1-mediated mesenchymal molar tooth bud development beyond the bud stage, via promoting Wnt signaling. Acts as a positive regulator of odontoblast differentiation during mesenchymal tooth germ formation, expression is repressed during the bell stage by MSX1-mediated inhibition of CTNNB1 signaling. Able to induce its own expression in dental mesenchymal cells and also in the neighboring dental epithelial cells via an MSX1-mediated pathway. Can also signal through non-canonical BMP pathways such as ERK/MAP kinase, PI3K/Akt, or SRC cascades. For example, induces SRC phosphorylation which, in turn, activates VEGFR2, leading to an angiogenic response. This Bos taurus (Bovine) protein is Bone morphogenetic protein 4.